Consider the following 441-residue polypeptide: UBX domain-containing protein 6 (441 aa).

Residues 1 to 10 (MKKFFQEFKA) are mediates interaction with LMAN1. At K2 the chain carries N-acetylalanine. 2 disordered regions span residues 13–79 (KFKS…QDTI) and 87–106 (LQAE…NVVS). The segment covering 22 to 36 (KLKESVGEKAHKEKP) has biased composition (basic and acidic residues). The interval 51–63 (EAQMAAAAALARL) is VCP/p97-interacting motif (VIM). A compositionally biased stretch (low complexity) spans 52–61 (AQMAAAAALA). S96 bears the Phosphoserine mark. Residues 175 to 244 (VDTIAKYLDN…DPEEFYVLSE (70 aa)) form the PUB domain. One can recognise a UBX domain in the interval 332-408 (RKYNYTLLRV…GLVPSALLTF (77 aa)).

As to quaternary structure, interacts with VCP through the PUB domain (via C-terminus) and VIM motif (via N-terminus); the interaction is direct. Forms a ternary complex with CAV1 and VCP. Interacts with SYVN1. Interacts with HERPUD1. Interacts with VCPKMT. May interact with DERL1. Interacts with PLAA, VCP and YOD1; may form a complex involved in macroautophagy. Interacts with LMAN1. Enhanced expression in testis.

It localises to the cytoplasm. The protein localises to the cytosol. The protein resides in the membrane. It is found in the nucleus. Its subcellular location is the cytoskeleton. It localises to the microtubule organizing center. The protein localises to the centrosome. The protein resides in the early endosome membrane. It is found in the late endosome membrane. Its subcellular location is the lysosome membrane. Its function is as follows. May negatively regulate the ATPase activity of VCP, an ATP-driven segregase that associates with different cofactors to control a wide variety of cellular processes. As a cofactor of VCP, it may play a role in the transport of CAV1 to lysosomes for degradation. It may also play a role in endoplasmic reticulum-associated degradation (ERAD) of misfolded proteins. Together with VCP and other cofactors, it may play a role in macroautophagy, regulating for instance the clearance of damaged lysosomes. This chain is UBX domain-containing protein 6, found in Homo sapiens (Human).